The primary structure comprises 352 residues: Gap junction alpha-4 protein (352 aa).

Residues 2–23 (GDWEFLEKLLDQVQEHSTSIGK) lie on the Cytoplasmic side of the membrane. A helical membrane pass occupies residues 24–46 (IWLMVLFIFRILILGLAGESVWG). The Extracellular portion of the chain corresponds to 47–76 (DEQSDFTCNTEQPGCTNVCYDKAFPISHVR). The helical transmembrane segment at 77–99 (YWVLQFLFVSTPTLFYLGHVIYL) threads the bilayer. At 100 to 153 (SRKEEKLKQKESELRALDDKEQVEQAIAIIEKKKLKLYIQEDGTVKIKGALMYT) the chain is on the cytoplasmic side. Residues 154 to 176 (YLTSVIFKSIFEAGFLLGQWYLY) form a helical membrane-spanning segment. Topologically, residues 177-208 (GFVMTPIYVCERVPCPHKVDCFVSRPMEKTIF) are extracellular. A helical membrane pass occupies residues 209–231 (IIFMLVVSLISLFLNVLELIHLI). The Cytoplasmic portion of the chain corresponds to 232–352 (CKSMIHALKK…SSSASKKQYV (121 aa)). Residues 332–352 (HSTVEKASTRASSSASKKQYV) are disordered. A compositionally biased stretch (low complexity) spans 340-352 (TRASSSASKKQYV).

This sequence belongs to the connexin family. Alpha-type (group II) subfamily. A connexon is composed of a hexamer of connexins. In terms of tissue distribution, expressed in ovarian somatic cells, heart, leg muscle, liver and eye but not in brain.

The protein resides in the cell membrane. Its subcellular location is the cell junction. The protein localises to the gap junction. In terms of biological role, one gap junction consists of a cluster of closely packed pairs of transmembrane channels, the connexons, through which materials of low MW diffuse from one cell to a neighboring cell. The protein is Gap junction alpha-4 protein (gja4) of Xenopus laevis (African clawed frog).